The chain runs to 641 residues: UvrABC system protein C (641 aa).

The GIY-YIG domain maps to 16-95 (ESPGVYRFWD…IKQYEPRFNI (80 aa)). The UVR domain occupies 208-243 (TEYLRRLEKDMRAAAAAEDFERAARLRDDAAALRLA).

Belongs to the UvrC family. As to quaternary structure, interacts with UvrB in an incision complex.

The protein resides in the cytoplasm. Functionally, the UvrABC repair system catalyzes the recognition and processing of DNA lesions. UvrC both incises the 5' and 3' sides of the lesion. The N-terminal half is responsible for the 3' incision and the C-terminal half is responsible for the 5' incision. The chain is UvrABC system protein C from Acidothermus cellulolyticus (strain ATCC 43068 / DSM 8971 / 11B).